We begin with the raw amino-acid sequence, 270 residues long: Matrix protein 1 (270 aa).

The protein resides in the virion. The sequence is that of Matrix protein 1 (M1) from Homo sapiens (Human).